The following is a 281-amino-acid chain: MRLCGFEAGLQHPFFLMAGPCAIESESLALRTAEDLRDICARLGIPFIYKSSYDKANRSSGQSFRGPGMDEGLRILEKVRREVGVPVVTDVHEKEDVSAVAEVVDVLQTPAFLCRQTDFIQAVAAAGKPVNIKKGQFLAPWDMLHVASKAKATGNEQIMVCERGASFGYNNLVSDMRSLAVMRQTGCPVVFDATHSVQLPGGQGDRSGGQREFIPVLARAAVAAGVSGLFMETHPNPADALSDGPNAWPLGRMEDLLRILQHIDHVVKNQDFPENYPEELV.

The protein belongs to the KdsA family.

The protein resides in the cytoplasm. It carries out the reaction D-arabinose 5-phosphate + phosphoenolpyruvate + H2O = 3-deoxy-alpha-D-manno-2-octulosonate-8-phosphate + phosphate. Its pathway is carbohydrate biosynthesis; 3-deoxy-D-manno-octulosonate biosynthesis; 3-deoxy-D-manno-octulosonate from D-ribulose 5-phosphate: step 2/3. It participates in bacterial outer membrane biogenesis; lipopolysaccharide biosynthesis. In Acidithiobacillus ferrooxidans (strain ATCC 23270 / DSM 14882 / CIP 104768 / NCIMB 8455) (Ferrobacillus ferrooxidans (strain ATCC 23270)), this protein is 2-dehydro-3-deoxyphosphooctonate aldolase.